Consider the following 48-residue polypeptide: Large ribosomal subunit protein bL32 (48 aa).

A disordered region spans residues 1–20 (MAVPDRRVSKTRAAKRRTHY). A compositionally biased stretch (basic residues) spans 9–20 (SKTRAAKRRTHY).

Belongs to the bacterial ribosomal protein bL32 family.

This Helicobacter acinonychis (strain Sheeba) protein is Large ribosomal subunit protein bL32.